We begin with the raw amino-acid sequence, 456 residues long: Outer membrane efflux protein BepC (456 aa).

Positions 1–28 are cleaved as a signal peptide; the sequence is MRYTVFKACKELVAAAVLLSGTVLTGQA. Residues 312–341 are a coiled coil; the sequence is RTSAQIRQSKEQLGQARIEVDVVQDKVRQA.

It belongs to the outer membrane factor (OMF) (TC 1.B.17) family. In terms of assembly, probably part of a tripartite efflux pump, which is composed of an outer membrane efflux protein, an inner membrane protein and a protein that expands the periplasmic space. Could form a tripartite pump with BepD and BepE or with BepF and BepG.

It is found in the cell outer membrane. Functionally, involved in the efflux of toxic and relatively hydrophobic compounds. Influences survival inside the host. The protein is Outer membrane efflux protein BepC (bepC) of Brucella suis biovar 1 (strain 1330).